A 242-amino-acid chain; its full sequence is Terpene cyclase cle7 (242 aa).

Transmembrane regions (helical) follow at residues 20–40 (LLLTLFSLSGTGWLINYITTI), 50–69 (GVSLVALTNNLAWELVFAIL), 79–101 (VILRSWLFVDIFVIYTTAKFARS), 117–137 (LFVLFGILGFFSGHWALSVLL), 143–163 (FYWSGMMCLVVMSGTALGILV), 172–192 (SYGMWFSRFVGSIFAVASLFL), and 207–227 (ILMRWFAGAFVVLDGLYGVCF).

It belongs to the paxB family.

The protein resides in the membrane. It participates in secondary metabolite biosynthesis; terpenoid biosynthesis. Its function is as follows. Non-reducing polyketide synthase; part of the cluster A that mediates the biosynthesis of chevalone E and its oxidized derivatives that possess a unique five-membered lactone ring and can synergistically enhance the cytotoxicity of doxorubicin (DOX) in breast cancer cells. Within the pathway, cle7 takes part to the biosynthesis of the molecular scaffold by catalyzing the cyclization of the prenyl group initiated by protonation and ring-opening of the epoxide to produce the chevalone E intermediate. The molecular scaffold is commonly biosynthesized by a series of enzymes including the non-reducing polyketide synthase (NR-PKS) cle1 that produces the alpha-pyrone triacetic acid lactone (TAL); The membrane-bound prenyltransferase cle5 that accepts TAL as its substrate to perform a C-3 geranylgeranylation reaction, in which the pathway-dedicated GGPS cle6 is required to provide GGPP, the other substrate of cle5; the FAD-dependent monooxygenase Cle3 that forms an (S)-epoxide ring at the terminal olefin of the geranylgeranyl group; and the terpene cyclase Cle7 that catalyzes the cyclization of the prenyl group that yields the pentacyclic pathway intermediate chevalone E. Chevalone E can derivatize into seven new oxidized analogs by the cytochrome P450 monooxygenases cle2 (acting at C-20) and cle4 (acting at C-11 and C-12). The polypeptide is Terpene cyclase cle7 (Aspergillus versicolor).